The following is a 300-amino-acid chain: Mitochondrial carnitine/acylcarnitine carrier-like protein (300 aa).

Solcar repeat units lie at residues 2-93 (ADAW…MEGL), 102-201 (LTIS…FKRF), and 211-298 (LGQG…TRSS). A run of 6 helical transmembrane segments spans residues 8–28 (LASGTVGGAAQLVVGHPFDTI), 64–84 (GLYKGMGAPLATVAAFNAVLF), 108–128 (FVAGAGAGFAVSFLACPTELI), 176–195 (GLFPTFAREVPGNATMFAAY), 211–231 (LGQGSLIMAGGVAGASFWGIV), and 273–292 (GFGPAMARSVPANAACFLAY).

Belongs to the mitochondrial carrier (TC 2.A.29) family. As to expression, high expression in cotyledons, leaves, flowers and developing siliques. Lower expression in roots and maturing siliques. Not detected in meristematic tissues.

The protein localises to the mitochondrion inner membrane. Its function is as follows. Involved in photorespiratory metabolism. Acts probably as a carrier for a glycine decarboxylase (GDC) cofactor or, alternatively, may act as a mitochondrial glycine shuttle. Involved in the transition from the embryonic stage to the juvenile autotrophic stage. The sequence is that of Mitochondrial carnitine/acylcarnitine carrier-like protein (BOU) from Arabidopsis thaliana (Mouse-ear cress).